We begin with the raw amino-acid sequence, 53 residues long: Serine rich endogenous peptide 3 (53 aa).

Positions M1–C26 are cleaved as a signal peptide. The short motif at S37–Y53 is the SCOOP motif element. A SxS motif essential for MIK2 binding motif is present at residues S49–S51.

It belongs to the serine rich endogenous peptide (SCOOP) phytocytokine family. As to quaternary structure, interacts with MIK2 (via extracellular leucine-rich repeat domain); this interaction triggers the formation of complex between MIK2 and the BAK1/SERK3 and SERK4 coreceptors, and subsequent BAK1 activation by phosphorylation.

It is found in the cell membrane. The protein resides in the secreted. Its subcellular location is the extracellular space. The protein localises to the apoplast. Brassicaceae-specific phytocytokine (plant endogenous peptide released into the apoplast) perceived by MIK2 in a BAK1/SERK3 and SERK4 coreceptors-dependent manner, that modulates various physiological and antimicrobial processes including growth prevention and reactive oxygen species (ROS) response regulation. In Arabidopsis thaliana (Mouse-ear cress), this protein is Serine rich endogenous peptide 3.